Here is a 151-residue protein sequence, read N- to C-terminus: Large ribosomal subunit protein bL9 (151 aa).

It belongs to the bacterial ribosomal protein bL9 family.

In terms of biological role, binds to the 23S rRNA. The protein is Large ribosomal subunit protein bL9 of Lactobacillus acidophilus (strain ATCC 700396 / NCK56 / N2 / NCFM).